Here is a 210-residue protein sequence, read N- to C-terminus: Chaperone protein TorD (210 aa).

The protein belongs to the TorD/DmsD family. TorD subfamily.

Its subcellular location is the cytoplasm. Involved in the biogenesis of TorA. Acts on TorA before the insertion of the molybdenum cofactor and, as a result, probably favors a conformation of the apoenzyme that is competent for acquiring the cofactor. The sequence is that of Chaperone protein TorD from Salmonella newport (strain SL254).